The sequence spans 85 residues: U4-theraphotoxin-Hhn1f (85 aa).

The N-terminal stretch at 1-22 (MKVTLIAILTCAAVLVLHTTAA) is a signal peptide. A propeptide spanning residues 23–48 (EELEAESQLMEVGMPDTELAAVDEER) is cleaved from the precursor. Cysteine 71 and cysteine 82 are joined by a disulfide.

This sequence belongs to the neurotoxin 12 (Hwtx-2) family. 02 (Hwtx-2) subfamily. As to expression, expressed by the venom gland.

Its subcellular location is the secreted. Its function is as follows. Postsynaptic neurotoxin. This Cyriopagopus hainanus (Chinese bird spider) protein is U4-theraphotoxin-Hhn1f.